We begin with the raw amino-acid sequence, 496 residues long: Ribose import ATP-binding protein RbsA (496 aa).

ABC transporter domains are found at residues 5 to 241 (LQMK…VGRE) and 252 to 496 (SPGE…VGGE). Residue 37 to 44 (GENGAGKS) participates in ATP binding.

It belongs to the ABC transporter superfamily. Ribose importer (TC 3.A.1.2.1) family. As to quaternary structure, the complex is composed of an ATP-binding protein (RbsA), two transmembrane proteins (RbsC) and a solute-binding protein (RbsB).

It is found in the cell membrane. The catalysed reaction is D-ribose(out) + ATP + H2O = D-ribose(in) + ADP + phosphate + H(+). Functionally, part of the ABC transporter complex RbsABC involved in ribose import. Responsible for energy coupling to the transport system. This chain is Ribose import ATP-binding protein RbsA, found in Caldanaerobacter subterraneus subsp. tengcongensis (strain DSM 15242 / JCM 11007 / NBRC 100824 / MB4) (Thermoanaerobacter tengcongensis).